Here is a 427-residue protein sequence, read N- to C-terminus: Glutamate-1-semialdehyde 2,1-aminomutase (427 aa).

K265 bears the N6-(pyridoxal phosphate)lysine mark.

This sequence belongs to the class-III pyridoxal-phosphate-dependent aminotransferase family. HemL subfamily. As to quaternary structure, homodimer. Requires pyridoxal 5'-phosphate as cofactor.

It is found in the cytoplasm. It catalyses the reaction (S)-4-amino-5-oxopentanoate = 5-aminolevulinate. Its pathway is porphyrin-containing compound metabolism; protoporphyrin-IX biosynthesis; 5-aminolevulinate from L-glutamyl-tRNA(Glu): step 2/2. The protein is Glutamate-1-semialdehyde 2,1-aminomutase of Shewanella amazonensis (strain ATCC BAA-1098 / SB2B).